A 644-amino-acid polypeptide reads, in one-letter code: Threonine--tRNA ligase (644 aa).

The TGS domain occupies 1–62 (MSFSITLPDG…DSDSEVAIIT (62 aa)). The segment at 240 to 538 (DHRTIGRDLD…LTEIYKGAFP (299 aa)) is catalytic. Positions 334, 385, and 515 each coordinate Zn(2+).

It belongs to the class-II aminoacyl-tRNA synthetase family. As to quaternary structure, homodimer. Zn(2+) serves as cofactor.

It localises to the cytoplasm. The enzyme catalyses tRNA(Thr) + L-threonine + ATP = L-threonyl-tRNA(Thr) + AMP + diphosphate + H(+). Functionally, catalyzes the attachment of threonine to tRNA(Thr) in a two-step reaction: L-threonine is first activated by ATP to form Thr-AMP and then transferred to the acceptor end of tRNA(Thr). Also edits incorrectly charged L-seryl-tRNA(Thr). The protein is Threonine--tRNA ligase of Lactobacillus helveticus (strain DPC 4571).